Reading from the N-terminus, the 98-residue chain is NADH-ubiquinone oxidoreductase chain 4L (98 aa).

3 helical membrane passes run 1 to 21 (MTLI…GLLM), 29 to 49 (ALLC…LTIL), and 61 to 81 (IILL…LVMV).

This sequence belongs to the complex I subunit 4L family. As to quaternary structure, core subunit of respiratory chain NADH dehydrogenase (Complex I) which is composed of 45 different subunits.

It localises to the mitochondrion inner membrane. It catalyses the reaction a ubiquinone + NADH + 5 H(+)(in) = a ubiquinol + NAD(+) + 4 H(+)(out). In terms of biological role, core subunit of the mitochondrial membrane respiratory chain NADH dehydrogenase (Complex I) which catalyzes electron transfer from NADH through the respiratory chain, using ubiquinone as an electron acceptor. Part of the enzyme membrane arm which is embedded in the lipid bilayer and involved in proton translocation. The chain is NADH-ubiquinone oxidoreductase chain 4L (MT-ND4L) from Balaenoptera borealis (Sei whale).